The chain runs to 483 residues: Iron-sulfur cluster assembly SufBD family protein ycf24 (483 aa).

This sequence belongs to the iron-sulfur cluster assembly SufBD family.

The protein localises to the plastid. Its subcellular location is the chloroplast. This chain is Iron-sulfur cluster assembly SufBD family protein ycf24 (ycf24), found in Guillardia theta (Cryptophyte).